The chain runs to 200 residues: Small ribosomal subunit protein mS38 (200 aa).

This sequence belongs to the mitochondrion-specific ribosomal protein mS38 family. Component of the mitochondrial ribosome small subunit (28S) which comprises a 12S rRNA and about 30 distinct proteins. Interacts with Aurora-A. As to expression, ubiquitously expressed and especially highly expressed in heart, skeletal muscle and testis.

It is found in the mitochondrion matrix. The protein resides in the nucleus. Its function is as follows. May act as a negative regulator of Aurora-A kinase, by down-regulation through proteasome-dependent degradation. The chain is Small ribosomal subunit protein mS38 (Aurkaip1) from Mus musculus (Mouse).